The following is a 345-amino-acid chain: Selenide, water dikinase (345 aa).

Cys-15 is a catalytic residue. Residues Lys-18 and 46-48 (SKD) contribute to the ATP site. Asp-49 is a binding site for Mg(2+). Residues Asp-66, Asp-89, and 137-139 (GHS) contribute to the ATP site. Asp-89 contributes to the Mg(2+) binding site. Asp-225 serves as a coordination point for Mg(2+).

The protein belongs to the selenophosphate synthase 1 family. Class I subfamily. In terms of assembly, homodimer. Mg(2+) is required as a cofactor.

The enzyme catalyses hydrogenselenide + ATP + H2O = selenophosphate + AMP + phosphate + 2 H(+). In terms of biological role, synthesizes selenophosphate from selenide and ATP. The polypeptide is Selenide, water dikinase (Aeromonas salmonicida (strain A449)).